The following is a 183-amino-acid chain: Inner membrane-spanning protein YciB (183 aa).

5 consecutive transmembrane segments (helical) span residues 19–39 (LYGV…QLIV), 53–73 (IMGI…DLNF), 76–96 (WKVT…QFVF), 121–141 (LGWA…SYYF), and 151–171 (TFGF…YLYP).

Belongs to the YciB family.

The protein resides in the cell inner membrane. In terms of biological role, plays a role in cell envelope biogenesis, maintenance of cell envelope integrity and membrane homeostasis. The polypeptide is Inner membrane-spanning protein YciB (Actinobacillus pleuropneumoniae serotype 5b (strain L20)).